Here is a 165-residue protein sequence, read N- to C-terminus: 6,7-dimethyl-8-ribityllumazine synthase (165 aa).

Residues phenylalanine 24, 62-64 (AFE), and 86-88 (AVI) each bind 5-amino-6-(D-ribitylamino)uracil. 91–92 (DT) is a binding site for (2S)-2-hydroxy-3-oxobutyl phosphate. Residue histidine 94 is the Proton donor of the active site. Phenylalanine 119 lines the 5-amino-6-(D-ribitylamino)uracil pocket. Arginine 133 contributes to the (2S)-2-hydroxy-3-oxobutyl phosphate binding site.

The protein belongs to the DMRL synthase family.

The catalysed reaction is (2S)-2-hydroxy-3-oxobutyl phosphate + 5-amino-6-(D-ribitylamino)uracil = 6,7-dimethyl-8-(1-D-ribityl)lumazine + phosphate + 2 H2O + H(+). Its pathway is cofactor biosynthesis; riboflavin biosynthesis; riboflavin from 2-hydroxy-3-oxobutyl phosphate and 5-amino-6-(D-ribitylamino)uracil: step 1/2. In terms of biological role, catalyzes the formation of 6,7-dimethyl-8-ribityllumazine by condensation of 5-amino-6-(D-ribitylamino)uracil with 3,4-dihydroxy-2-butanone 4-phosphate. This is the penultimate step in the biosynthesis of riboflavin. This is 6,7-dimethyl-8-ribityllumazine synthase from Prochlorococcus marinus (strain MIT 9313).